A 497-amino-acid polypeptide reads, in one-letter code: Probable malate:quinone oxidoreductase (497 aa).

Belongs to the MQO family. FAD is required as a cofactor.

It carries out the reaction (S)-malate + a quinone = a quinol + oxaloacetate. The protein operates within carbohydrate metabolism; tricarboxylic acid cycle; oxaloacetate from (S)-malate (quinone route): step 1/1. This is Probable malate:quinone oxidoreductase from Wolinella succinogenes (strain ATCC 29543 / DSM 1740 / CCUG 13145 / JCM 31913 / LMG 7466 / NCTC 11488 / FDC 602W) (Vibrio succinogenes).